A 482-amino-acid polypeptide reads, in one-letter code: tRNA sulfurtransferase (482 aa).

One can recognise a THUMP domain in the interval 61 to 165; the sequence is QQVLEILTTT…DDKLNQILAH (105 aa). Residues 183–184, Lys265, Gly287, and Gln296 contribute to the ATP site; that span reads LI. A disulfide bridge connects residues Cys344 and Cys456. Residues 404–482 enclose the Rhodanese domain; the sequence is IEEHAVVLDI…GFNNVKVYRP (79 aa). Cys456 functions as the Cysteine persulfide intermediate in the catalytic mechanism.

It belongs to the ThiI family.

It localises to the cytoplasm. The enzyme catalyses [ThiI sulfur-carrier protein]-S-sulfanyl-L-cysteine + a uridine in tRNA + 2 reduced [2Fe-2S]-[ferredoxin] + ATP + H(+) = [ThiI sulfur-carrier protein]-L-cysteine + a 4-thiouridine in tRNA + 2 oxidized [2Fe-2S]-[ferredoxin] + AMP + diphosphate. It carries out the reaction [ThiS sulfur-carrier protein]-C-terminal Gly-Gly-AMP + S-sulfanyl-L-cysteinyl-[cysteine desulfurase] + AH2 = [ThiS sulfur-carrier protein]-C-terminal-Gly-aminoethanethioate + L-cysteinyl-[cysteine desulfurase] + A + AMP + 2 H(+). It functions in the pathway cofactor biosynthesis; thiamine diphosphate biosynthesis. Catalyzes the ATP-dependent transfer of a sulfur to tRNA to produce 4-thiouridine in position 8 of tRNAs, which functions as a near-UV photosensor. Also catalyzes the transfer of sulfur to the sulfur carrier protein ThiS, forming ThiS-thiocarboxylate. This is a step in the synthesis of thiazole, in the thiamine biosynthesis pathway. The sulfur is donated as persulfide by IscS. The protein is tRNA sulfurtransferase of Vibrio vulnificus (strain CMCP6).